The following is a 529-amino-acid chain: Scarecrow-like protein 13 (529 aa).

Residues 51–81 show a composition bias toward polar residues; sequence ASGSLPSYDSPSVSITSGRSPFSPQGSQSCI. Positions 51–84 are disordered; it reads ASGSLPSYDSPSVSITSGRSPFSPQGSQSCISDL. The 380-residue stretch at 146-525 folds into the GRAS domain; it reads LLALTPQLDL…RPMATCSVWK (380 aa). The tract at residues 153 to 213 is leucine repeat I (LRI); sequence LDLKEVLVEA…RARLEGSGSN (61 aa). Residues 232-297 form a VHIID region; the sequence is MSVLYEICPY…GGPPLLRVTG (66 aa). The short motif at 263–267 is the VHIID element; that stretch reads VHIID. Residues 313–345 are leucine repeat II (LRII); sequence LVGERLATLAQSCGVPFEFHDAIMSGCKVQREH. The tract at residues 354–448 is PFYRE; that stretch reads VVVNFPYVLH…QHCVARDIVN (95 aa). The interval 451-525 is SAW; it reads ACEESERVER…RPMATCSVWK (75 aa).

The protein belongs to the GRAS family. As to expression, expressed in roots, hypocotyls, cotyledons, shoot apex, leaves, flowers and siliques.

It is found in the cytoplasm. The protein resides in the nucleus. Its function is as follows. Probable transcription factor that acts as a positive regulator of continuous red light signals downstream of phytochrome B (phyB). Required for the regulation of hypocotyl elongation during de-etiolation. May be required to modulate phytochrome A (phyA) signal transduction in a phyB-independent way. This is Scarecrow-like protein 13 (SCL13) from Arabidopsis thaliana (Mouse-ear cress).